A 465-amino-acid chain; its full sequence is MATGKIIQIIGAVVDVEFNQDSVPKIYNALEVKNKQYKLILEVQQQLGSGVVRTIAMGSSNGLKRGLIVTDLGHYIKVPVGEATLGRIINVLGETIDNKGALKNNQSDKIEYWEIHRSPPSYRDQASCREILETGIKVIDLICPFSKGGKVGLFGGAGVGKTVNMMELIRNIAVEHSGYSVFTGVGERTREGNDFYHEMNDSQVLDKVSLVYGQMNEPPGNRLRVAFTGLTIAEKFRDEGKDVLLFIDNIYRYTLAGTEVSALLGRMPSAVGYQPTLAEEMGLLQERITSTKNGSITSVQAVYVPADDLTDPSPATTFAHLDSTVTLSRQIASLGIYPAIDPLNSTSRQLDPYIVGDEHYETALGVQSILQRYQELKDIIAILGMDELAEKDKLLVSRARKIQRFLSQPFFVAEVFTGFPGKYVSLKDNIRAFKGIIKGEFDDLPEQAFYMVGSIEEVIEKAKKL.

Residue 155 to 162 coordinates ATP; it reads GGAGVGKT.

The protein belongs to the ATPase alpha/beta chains family. As to quaternary structure, F-type ATPases have 2 components, CF(1) - the catalytic core - and CF(0) - the membrane proton channel. CF(1) has five subunits: alpha(3), beta(3), gamma(1), delta(1), epsilon(1). CF(0) has three main subunits: a(1), b(2) and c(9-12). The alpha and beta chains form an alternating ring which encloses part of the gamma chain. CF(1) is attached to CF(0) by a central stalk formed by the gamma and epsilon chains, while a peripheral stalk is formed by the delta and b chains.

Its subcellular location is the cell membrane. The catalysed reaction is ATP + H2O + 4 H(+)(in) = ADP + phosphate + 5 H(+)(out). In terms of biological role, produces ATP from ADP in the presence of a proton gradient across the membrane. The catalytic sites are hosted primarily by the beta subunits. In Buchnera aphidicola subsp. Acyrthosiphon pisum (strain 5A), this protein is ATP synthase subunit beta.